Reading from the N-terminus, the 320-residue chain is Cytochrome f (320 aa).

A signal peptide spans 1–35; sequence MQTRNTFSWIKEEITRSISVSLMIYIITGASISNA. 4 residues coordinate heme: Tyr-36, Cys-56, Cys-59, and His-60. Residues 286–306 form a helical membrane-spanning segment; sequence VQGLLFFLASIVFAQIFLVLK.

The protein belongs to the cytochrome f family. The 4 large subunits of the cytochrome b6-f complex are cytochrome b6, subunit IV (17 kDa polypeptide, petD), cytochrome f and the Rieske protein, while the 4 small subunits are PetG, PetL, PetM and PetN. The complex functions as a dimer. It depends on heme as a cofactor.

The protein resides in the plastid. Its subcellular location is the chloroplast thylakoid membrane. Functionally, component of the cytochrome b6-f complex, which mediates electron transfer between photosystem II (PSII) and photosystem I (PSI), cyclic electron flow around PSI, and state transitions. The polypeptide is Cytochrome f (Gossypium barbadense (Sea Island cotton)).